Reading from the N-terminus, the 109-residue chain is Protein AC78 (109 aa).

Residues 61 to 81 traverse the membrane as a helical segment; it reads GIIILISVVAFIALFLLLYVI.

Its subcellular location is the host membrane. The protein localises to the virion. Plays an essential role in budded virus production and occlusion body formation. The protein is Protein AC78 (AC78) of Autographa californica nuclear polyhedrosis virus (AcMNPV).